A 983-amino-acid chain; its full sequence is 3',5'-cyclic-AMP phosphodiesterase, isoforms N/G (983 aa).

Disordered stretches follow at residues 31–333 (MPEG…SAGL), 349–370 (SDSD…ASES), 400–429 (VPAS…LSQG), and 528–566 (SAGQ…RLPT). Over residues 35 to 50 (GEDHRGDLNQKGENNN) the composition is skewed to basic and acidic residues. Residues 51-60 (RPRPSISLAN) are compositionally biased toward polar residues. Residues 84 to 97 (SVGGGDSDGGGEAI) are compositionally biased toward gly residues. Low complexity-rich tracts occupy residues 112 to 121 (LSTTTSNSSS) and 145 to 167 (QLQQ…SQRS). Over residues 174 to 199 (AEGEEFDVDPMDEDDEDQTYDRETEE) the composition is skewed to acidic residues. Composition is skewed to low complexity over residues 219 to 234 (SSLF…TTSS) and 248 to 261 (AASI…SDLM). Composition is skewed to polar residues over residues 268 to 287 (STAT…SQRR), 358 to 368 (KSMSRNSSIAS), and 401 to 419 (PASN…SRSG). Residues 569–898 (VETPRENELG…DYYQSMIPPS (330 aa)) form the PDEase domain. His-645 functions as the Proton donor in the catalytic mechanism. A 3',5'-cyclic AMP-binding site is contributed by 645-649 (HNSLH). Residues His-649, His-685, Asp-686, and Asp-803 each contribute to the a divalent metal cation site. Asp-686, Asp-803, and Gln-854 together coordinate 3',5'-cyclic AMP. The span at 920–937 (EESDQENLAELEEGDESG) shows a compositional bias: acidic residues. The tract at residues 920–983 (EESDQENLAE…CQNQPQHGGM (64 aa)) is disordered. The span at 938-955 (GESTTTGTTGTTAASALS) shows a compositional bias: low complexity. The span at 956-967 (GAGGGGGGGGGM) shows a compositional bias: gly residues. The segment covering 973-983 (GCQNQPQHGGM) has biased composition (polar residues).

It belongs to the cyclic nucleotide phosphodiesterase family. PDE4 subfamily. In terms of assembly, monomer. It depends on a divalent metal cation as a cofactor.

It carries out the reaction 3',5'-cyclic AMP + H2O = AMP + H(+). The protein operates within purine metabolism; 3',5'-cyclic AMP degradation; AMP from 3',5'-cyclic AMP: step 1/1. Its function is as follows. Hydrolyzes the second messenger cAMP, which is a key regulator of many important physiological processes. Vital for female fertility. Required for learning/memory. In Drosophila melanogaster (Fruit fly), this protein is 3',5'-cyclic-AMP phosphodiesterase, isoforms N/G.